The following is a 187-amino-acid chain: ATP synthase subunit b (187 aa).

The chain crosses the membrane as a helical span at residues 36–53; that stretch reads PYQWVSVAMLVLIAIMLW.

This sequence belongs to the ATPase B chain family. As to quaternary structure, F-type ATPases have 2 components, F(1) - the catalytic core - and F(0) - the membrane proton channel. F(1) has five subunits: alpha(3), beta(3), gamma(1), delta(1), epsilon(1). F(0) has four main subunits: a(1), b(2) and c(10-14). The alpha and beta chains form an alternating ring which encloses part of the gamma chain. F(1) is attached to F(0) by a central stalk formed by the gamma and epsilon chains, while a peripheral stalk is formed by the delta and b chains.

It is found in the cell inner membrane. Its function is as follows. F(1)F(0) ATP synthase produces ATP from ADP in the presence of a proton or sodium gradient. F-type ATPases consist of two structural domains, F(1) containing the extramembraneous catalytic core and F(0) containing the membrane proton channel, linked together by a central stalk and a peripheral stalk. During catalysis, ATP synthesis in the catalytic domain of F(1) is coupled via a rotary mechanism of the central stalk subunits to proton translocation. Functionally, component of the F(0) channel, it forms part of the peripheral stalk, linking F(1) to F(0). This is ATP synthase subunit b from Erythrobacter litoralis (strain HTCC2594).